We begin with the raw amino-acid sequence, 118 residues long: Cell division protein FtsB (118 aa).

The Cytoplasmic portion of the chain corresponds to 1 to 6 (MRNWRW). A helical membrane pass occupies residues 7–24 (LLLVLAALLAWLQHRFWF). The Periplasmic segment spans residues 25-118 (GPGNSGEVRM…DLSQPRREKR (94 aa)). A coiled-coil region spans residues 30 to 66 (GEVRMLQVQIVQQHQENERLRQRNASLAAEVKNLKDG). The disordered stretch occupies residues 98 to 118 (LPNDTSADHGVDLSQPRREKR). The span at 103-118 (SADHGVDLSQPRREKR) shows a compositional bias: basic and acidic residues.

It belongs to the FtsB family. In terms of assembly, part of a complex composed of FtsB, FtsL and FtsQ.

Its subcellular location is the cell inner membrane. In terms of biological role, essential cell division protein. May link together the upstream cell division proteins, which are predominantly cytoplasmic, with the downstream cell division proteins, which are predominantly periplasmic. The chain is Cell division protein FtsB from Xylella fastidiosa (strain M23).